The primary structure comprises 100 residues: Aspartyl/glutamyl-tRNA(Asn/Gln) amidotransferase subunit C (100 aa).

Belongs to the GatC family. Heterotrimer of A, B and C subunits.

The enzyme catalyses L-glutamyl-tRNA(Gln) + L-glutamine + ATP + H2O = L-glutaminyl-tRNA(Gln) + L-glutamate + ADP + phosphate + H(+). It catalyses the reaction L-aspartyl-tRNA(Asn) + L-glutamine + ATP + H2O = L-asparaginyl-tRNA(Asn) + L-glutamate + ADP + phosphate + 2 H(+). Allows the formation of correctly charged Asn-tRNA(Asn) or Gln-tRNA(Gln) through the transamidation of misacylated Asp-tRNA(Asn) or Glu-tRNA(Gln) in organisms which lack either or both of asparaginyl-tRNA or glutaminyl-tRNA synthetases. The reaction takes place in the presence of glutamine and ATP through an activated phospho-Asp-tRNA(Asn) or phospho-Glu-tRNA(Gln). This Streptococcus pneumoniae serotype 19F (strain G54) protein is Aspartyl/glutamyl-tRNA(Asn/Gln) amidotransferase subunit C.